The sequence spans 325 residues: 5-dehydro-2-deoxygluconokinase (325 aa).

This sequence belongs to the carbohydrate kinase PfkB family.

It carries out the reaction 5-dehydro-2-deoxy-D-gluconate + ATP = 6-phospho-5-dehydro-2-deoxy-D-gluconate + ADP + H(+). The protein operates within polyol metabolism; myo-inositol degradation into acetyl-CoA; acetyl-CoA from myo-inositol: step 5/7. Functionally, catalyzes the phosphorylation of 5-dehydro-2-deoxy-D-gluconate (2-deoxy-5-keto-D-gluconate or DKG) to 6-phospho-5-dehydro-2-deoxy-D-gluconate (DKGP). In Listeria monocytogenes serovar 1/2a (strain ATCC BAA-679 / EGD-e), this protein is 5-dehydro-2-deoxygluconokinase.